A 473-amino-acid polypeptide reads, in one-letter code: Mitochondrial adenyl nucleotide antiporter SLC25A24-A (473 aa).

The interval 1–173 is regulatory N-terminal domain; the sequence is MLEQVQKFLL…RFWKHSTVLD (173 aa). Residues 1-197 are Mitochondrial intermembrane-facing; sequence MLEQVQKFLL…EKKTGQWWKH (197 aa). EF-hand domains follow at residues 19-54, 55-88, 86-121, and 122-157; these read DSHTRYAELFHKLDVNKDGKVDILELQEGLKAMGMA, VGKGAEEKIVEAGDTNKDGHLDFGEFMRYLEEHE, EHEKKMKIAFTSLDKNKDGKIESSEVMNSLKTLGIN, and ISLDHAEKILKSMDSDGTLTVDWNEWRDHFLFNPAD. Residues Asp32, Asn34, Asp36, Lys38, Glu43, Asp68, Asn70, Asp72, His74, Glu79, Asp99, Asn101, Asp103, Lys105, Glu110, Asp135, Asp137, Thr139, Thr141, and Glu146 each contribute to the Ca(2+) site. Positions 159 to 168 are linker region; sequence IQQIIRFWKH. Residues 174–473 form a C-terminal transmembrane transporter domain region; that stretch reads IGDSLTIPDE…YEKMKIQLGI (300 aa). Solcar repeat units follow at residues 192–277, 285–370, and 382–470; these read GQWW…YKKL, LGTA…LKNY, and PGVL…MKIQ. Residues 198 to 215 traverse the membrane as a helical segment; the sequence is LLAGGMAGAVSRTGTAPL. Residues 216 to 251 lie on the Mitochondrial matrix side of the membrane; it reads DRLKVMMQVHGTKGNSNIITGLKQMVKEGGVRSLWR. A helical membrane pass occupies residues 252-271; sequence GNGVNVIKIAPETAMKFWAY. Over 272–294 the chain is Mitochondrial intermembrane; that stretch reads EQYKKLFTSESGKLGTAERFIAG. The chain crosses the membrane as a helical span at residues 295–308; the sequence is SLAGATAQTSIYPM. Topologically, residues 309-344 are mitochondrial matrix; it reads EVLKTRLAVGKTGQYSGMFDCAKKIMQKEGILAFYK. The chain crosses the membrane as a helical span at residues 345 to 364; sequence GYIPNILGIIPYAGIDLAIY. At 365 to 387 the chain is on the mitochondrial intermembrane side; the sequence is ETLKNYWLQNYAKDSANPGVLVL. Residues 388–405 form a helical membrane-spanning segment; sequence LGCGTVSSTCGQLASYPL. At 406 to 444 the chain is on the mitochondrial matrix side; it reads ALIRTRMQAQASIEGAPQLNMGGLFRKIVAKEGFFGLYT. The helical transmembrane segment at 445–464 threads the bilayer; it reads GIAPNFLKVLPAVSISYVVY. The Mitochondrial intermembrane portion of the chain corresponds to 465 to 473; it reads EKMKIQLGI.

The protein belongs to the mitochondrial carrier (TC 2.A.29) family. As to quaternary structure, monomer.

It localises to the mitochondrion inner membrane. It catalyses the reaction Mg(2+)(out) + phosphate(in) + ATP(out) = Mg(2+)(in) + phosphate(out) + ATP(in). The catalysed reaction is ADP(out) + phosphate(in) + H(+)(out) = ADP(in) + phosphate(out) + H(+)(in). The enzyme catalyses AMP(out) + phosphate(in) = AMP(in) + phosphate(out). It carries out the reaction phosphate(in) + ATP(out) + 2 H(+)(out) = phosphate(out) + ATP(in) + 2 H(+)(in). It catalyses the reaction dADP(in) + ADP(out) = dADP(out) + ADP(in). The catalysed reaction is Mg(2+)(in) + ADP(out) + ATP(in) + H(+)(out) = Mg(2+)(out) + ADP(in) + ATP(out) + H(+)(in). The enzyme catalyses ADP(out) + diphosphate(in) = ADP(in) + diphosphate(out). It carries out the reaction dAMP(in) + ADP(out) + H(+)(out) = dAMP(out) + ADP(in) + H(+)(in). It catalyses the reaction 3'-AMP(in) + ADP(out) + H(+)(out) = 3'-AMP(out) + ADP(in) + H(+)(in). The catalysed reaction is dAMP(out) + phosphate(in) = dAMP(in) + phosphate(out). The enzyme catalyses 3'-AMP(out) + phosphate(in) = 3'-AMP(in) + phosphate(out). It carries out the reaction dADP(out) + phosphate(in) + H(+)(out) = dADP(in) + phosphate(out) + H(+)(in). With respect to regulation, activated by an increase in cytosolic calcium levels that induce a conformational change of the N-terminal regulatory domain, uncapping the channel and allowing transport. Inhibited by bathophenanthroline, mersalyl, p-hydroxymercuribenzoate, bromcresol purple and tannic acid. Its function is as follows. Electroneutral antiporter that mediates the transport of adenyl nucleotides through the inner mitochondrial membrane. Originally identified as an ATP-magnesium/inorganic phosphate antiporter, it also acts as a broad specificity adenyl nucleotide antiporter. By regulating the mitochondrial matrix adenyl nucleotide pool could adapt to changing cellular energetic demands and indirectly regulate adenyl nucleotide-dependent metabolic pathways. This chain is Mitochondrial adenyl nucleotide antiporter SLC25A24-A (slc25a24-a), found in Xenopus laevis (African clawed frog).